Consider the following 610-residue polypeptide: MTTAAIRGLQGEAPTKNKELLNWIADAVELFQPEAVVFVDGSQAEWDRMAEDLVEAGTLIKLNEEKRPNSYLARSNPSDVARVESRTFICSEKEEDAGPTNNWAPPQAMKDEMSKHYAGSMKGRTMYVVPFCMGPISDPDPKLGVQLTDSEYVVMSMRIMTRMGIEALDKIGANGSFVKCLHSVGAPLEPGQEDVAWPCNDTKYITQFPETKEIWSYGSGYGGNAILAKKCYALRIASVMAREEGWMAEHMLILKLINPEGKAYHIAAAFPSACGKTNLAMITPTIPGWTAQVVGDDIAWLKLREDGLYAVNPENGFFGVAPGTNYASNPIAMKTMEPGNTLFTNVALTDDGDIWWEGMDGDAPAHLIDWKGNDWTPESDENAAHPNSRYCVAIDQSPAAAPEFNDWEGVKIDAILFGGRRADTVPLVTQTYDWEHGTMVGALLASGQTAASAEAKVGTLRHDPMAMLPFIGYNAGEYLQNWIDMGNKGGDKMPSIFLVNWFRRGEDGRFLWPGFGDNSRVLKWVIDRIEGRVGADETVVGHTAKAEDLDLDGLDTPIEDVKEALTAPAEQWANDVQDNAEYLTFLGPRVPAEVHSQFDALKARISAAHA.

Substrate contacts are provided by residues Arg-82 and 221–223; that span reads YGG. Positions 230 and 250 each coordinate Mn(2+). Residue Ser-272 participates in substrate binding. 273–278 contributes to the GTP binding site; the sequence is ACGKTN. Cys-274 is an active-site residue. Residue Asp-297 coordinates Mn(2+). 387–389 provides a ligand contact to substrate; that stretch reads NSR. Residues Arg-389, Arg-420, and 515-518 each bind GTP; that span reads FGDN.

Belongs to the phosphoenolpyruvate carboxykinase [GTP] family. In terms of assembly, monomer. Mn(2+) is required as a cofactor.

It is found in the cytoplasm. The enzyme catalyses oxaloacetate + GTP = phosphoenolpyruvate + GDP + CO2. The protein operates within carbohydrate biosynthesis; gluconeogenesis. Catalyzes the conversion of oxaloacetate (OAA) to phosphoenolpyruvate (PEP), the rate-limiting step in the metabolic pathway that produces glucose from lactate and other precursors derived from the citric acid cycle. The protein is Phosphoenolpyruvate carboxykinase [GTP] of Corynebacterium glutamicum (strain R).